The following is a 161-amino-acid chain: Regulator of ribonuclease activity A (161 aa).

The protein belongs to the RraA family. In terms of assembly, homotrimer. Binds to both RNA-binding sites in the C-terminal region of Rne and to RhlB.

The protein localises to the cytoplasm. Its function is as follows. Globally modulates RNA abundance by binding to RNase E (Rne) and regulating its endonucleolytic activity. Can modulate Rne action in a substrate-dependent manner by altering the composition of the degradosome. Modulates RNA-binding and helicase activities of the degradosome. The polypeptide is Regulator of ribonuclease activity A (Pseudoalteromonas atlantica (strain T6c / ATCC BAA-1087)).